A 197-amino-acid polypeptide reads, in one-letter code: Carnitine operon protein CaiE (197 aa).

A disordered region spans residues 177–197 (TAPEANRPRLRGTTEVKPKGQ). Over residues 188 to 197 (GTTEVKPKGQ) the composition is skewed to basic and acidic residues.

This sequence belongs to the transferase hexapeptide repeat family.

Its pathway is amine and polyamine metabolism; carnitine metabolism. Its function is as follows. Overproduction of CaiE stimulates the activity of CaiB and CaiD. The polypeptide is Carnitine operon protein CaiE (Proteus sp. (strain LE138)).